The sequence spans 163 residues: Myosin light chain 2 (163 aa).

EF-hand domains follow at residues 15 to 50 (DYIN…LGKT) and 92 to 127 (PERE…AGFE). Positions 28, 30, 32, and 39 each coordinate Ca(2+).

Interacts with the IQ domain of MYO1.

The protein localises to the bud neck. Regulatory light chain for the class II conventional myosin MYO1. May play a role in the disassembly of the MYO1 ring at the bud neck at the end of its contraction during cytokinesis. This Saccharomyces cerevisiae (strain ATCC 204508 / S288c) (Baker's yeast) protein is Myosin light chain 2 (MLC2).